The chain runs to 446 residues: Exodeoxyribonuclease 7 large subunit (446 aa).

It belongs to the XseA family. As to quaternary structure, heterooligomer composed of large and small subunits.

It localises to the cytoplasm. The catalysed reaction is Exonucleolytic cleavage in either 5'- to 3'- or 3'- to 5'-direction to yield nucleoside 5'-phosphates.. Functionally, bidirectionally degrades single-stranded DNA into large acid-insoluble oligonucleotides, which are then degraded further into small acid-soluble oligonucleotides. This chain is Exodeoxyribonuclease 7 large subunit, found in Vibrio cholerae serotype O1 (strain ATCC 39315 / El Tor Inaba N16961).